A 512-amino-acid polypeptide reads, in one-letter code: MKAGCSIVEKPEGGGGYQFPDWAYKTESSPGSRQIQLWHFILELLQKEEFRHVIAWQQGEYGEFVIKDPDEVARLWGRRKCKPQMNYDKLSRALRYYYNKRILHKTKGKRFTYKFNFNKLVMPNYPFINIRSSGVVPQSAPPVPTASSRFHFPPLDTHSPTNDVQPGRFSASSLTASGQESSNGTDRKTELSELEDGSAADWRRGVDPVSSRNAIGGGGIGHQKRKPDIMLPLFARPGMYPDPHSPFAVSPIPGRGGVLNVPISPALSLTPTIFSYSPSPGLSPFTSSSCFSFNPEEMKHYLHSQACSVFNYHLSPRTFPRYPGLMVPPLQCQMHPEESTQFSIKLQPPPVGRKNRERVESSEESAPVTTPTMASIPPRIKVEPASEKDPESLRQSAREKEEHTQEEGTVPSRTIEEEKGTIFARPAAPPIWPSVPISTPSGEPLEVTEDSEDRPGKEPSAPEKKEDALMPPKLRLKRRWNDDPEARELSKSGKFLWNGSGPQGLATAAADA.

Residues Ile-35–Asn-116 constitute a DNA-binding region (ETS). The segment at Val-136–His-222 is disordered. A phosphoserine mark is found at Ser-139, Ser-159, and Ser-315. Positions His-158–Gly-184 are enriched in polar residues. The disordered stretch occupies residues Pro-336–Ala-512. Basic and acidic residues-rich tracts occupy residues Ile-380–Glu-406, Asp-453–Ala-468, and Arg-479–Lys-491. Lys-381 participates in a covalent cross-link: Glycyl lysine isopeptide (Lys-Gly) (interchain with G-Cter in SUMO2). Lys-388 is subject to N6-acetyllysine; alternate. Lys-388 participates in a covalent cross-link: Glycyl lysine isopeptide (Lys-Gly) (interchain with G-Cter in SUMO2); alternate.

This sequence belongs to the ETS family.

It localises to the nucleus. Its function is as follows. Transcriptional repressor that contribute to growth arrest during terminal macrophage differentiation by repressing target genes involved in Ras-dependent proliferation. Represses MMP1 promoter activity. This is ETS translocation variant 3 (ETV3) from Homo sapiens (Human).